The following is a 986-amino-acid chain: Anoctamin-1 (986 aa).

The Cytoplasmic segment spans residues 1 to 333; that stretch reads MRVNEKYSTL…FGEKIGLYFA (333 aa). Positions 79–121 are disordered; that stretch reads LVRRVQHSDTPSGARSVKQDHPLPGKGASLDAGSGEPPMDYHE. Phosphoserine occurs at positions 107 and 196. A helical transmembrane segment spans residues 334 to 354; it reads WLGVYTQMLIPASIVGIIVFL. Residues 355 to 406 are Extracellular-facing; that stretch reads YGCATMDENIPSMEMCDQRHNITMCPLCDKTCSYWKMSSACATARASHLFDN. Disulfide bonds link Cys-370-Cys-395, Cys-379-Cys-862, Cys-382-Cys-386, and Cys-651-Cys-656. Residues 407–427 traverse the membrane as a helical segment; it reads PATVFFSVFMALWAATFMEHW. A Ca(2+)-binding site is contributed by Glu-425. The Cytoplasmic segment spans residues 428–519; it reads KRKQMRLNYR…RDRFPAYLTN (92 aa). The helical transmembrane segment at 520 to 540 threads the bilayer; the sequence is LVSIIFMIAVTFAIVLGVIIY. The Extracellular portion of the chain corresponds to 541 to 568; sequence RISMAAALAMNSSPSVRSNIRVTVTATA. Residues 569–589 traverse the membrane as a helical segment; that stretch reads VIINLVVIILLDEVYGCIARW. At 590-607 the chain is on the cytoplasmic side; sequence LTKIEVPKTEKSFEERLI. Residues 608 to 628 form a helical membrane-spanning segment; that stretch reads FKAFLLKFVNSYTPIFYVAFF. The Extracellular segment spans residues 629-657; that stretch reads KGRFVGRPGDYVYIFRSFRMEECAPGGCL. The helical transmembrane segment at 658 to 678 threads the bilayer; the sequence is MELCIQLSIIMLGKQLIQNNL. 6 residues coordinate Ca(2+): Asn-677, Glu-680, Glu-728, Glu-731, Glu-760, and Asp-764. Topologically, residues 679-725 are cytoplasmic; that stretch reads FEIGIPKMKKLIRYLKLKQQSPPDHEECVKRKQRYEVDYNLEPFAGL. The next 2 helical transmembrane spans lie at 726–746 and 747–767; these read TPEY…VASF and PLAP…DAKK. Topologically, residues 768-784 are cytoplasmic; that stretch reads FVTELRRPVAVRAKDIG. A helical membrane pass occupies residues 785–805; that stretch reads IWYNILRGIGKLAVIINAFVI. The Extracellular portion of the chain corresponds to 806–892; sequence SFTSDFIPRL…FWAVLAARLA (87 aa). N-linked (GlcNAc...) asparagine glycosylation is present at Asn-832. Residues 893-913 form a helical membrane-spanning segment; it reads FVIVFQNLVMFMSDFVDWVIP. Ca(2+)-binding residues include Asp-909 and Asp-914. At 914–986 the chain is on the cytoplasmic side; the sequence is DIPKDISQQI…PSHAYHGGVL (73 aa). Residues 951-960 are compositionally biased toward basic and acidic residues; that stretch reads KERQKDEPPC. Residues 951 to 986 are disordered; that stretch reads KERQKDEPPCNHHNTKACPDSLGSPAPSHAYHGGVL.

The protein belongs to the anoctamin family. Homodimer. Interacts with CFTR. Interacts with TRPV4. As to expression, expressed in nasal epithelial cells (at protein level). In the kidney, expressed in the collecting duct (at protein level). Broadly expressed with higher levels in liver, skeletal muscle and gastrointestinal muscles. Expressed in eccrine sweat glands.

Its subcellular location is the apical cell membrane. The protein localises to the presynapse. The enzyme catalyses chloride(in) = chloride(out). With respect to regulation, ATP and calmodulin are essential for its activation. Channel activity is inhibited by CFTR protein and by chloride inhibitors such as niflumic acid (NFA) and 4,4'-diisothiocyanatostilbene-2,2'-disulfonic acid (DIDS). Activated by heat with activation seen at temperatures above 44 degrees Celsius. Activated by BDNF in radial glial cells. In terms of biological role, calcium-activated chloride channel (CaCC). Plays a role in transepithelial anion transport and smooth muscle contraction. Required for the normal functioning of the interstitial cells of Cajal (ICCs) which generate electrical pacemaker activity in gastrointestinal smooth muscles. Acts as a major contributor to basal and stimulated chloride conductance in airway epithelial cells and plays an important role in tracheal cartilage development. Required for CFTR activation by enhancing endoplasmic reticulum Ca(2+) store release and is also required for CFTR membrane expression. Required for basal and ATP-dependent mucus secretion in airways and intestine, probably by controlling exocytosis of mucus-filled granules by providing Ca(2+) to an apical signaling compartment. Contributes to airway mucus expression induced by interleukins IL3 and IL8 and by the asthma-associated protein CLCA1 and is required for expression of mucin MUC5AC. However, was shown in another study not to be required for MUC5AC expression. Plays a role in the propagation of Ca(2+) waves in Kolliker's organ in the cochlea and contributes to the refinement of auditory brainstem circuitries prior to hearing onset. In vomeronasal sensory neurons, modulates spontaneous firing patterns in the absence of stimuli as well as the firing pattern of pheromone-evoked activity. Responsible for calcium-activated chloride channel activity in type I taste cells of the vallate papillae. Acts as a heat sensor in nociceptive neurons. In dorsal root ganglion neurons, plays a role in mediating non-histaminergic Mas-related G-protein coupled receptor (MRGPR)-dependent itching, acting as a downstream effector of MRGPRs. In the developing brain, required for the Ca(2+)-dependent process extension of radial glial cells. Calcium-activated chloride channel (CaCC). Contributes to calcium-activated chloride secretion in human sweat gland epithelial cells. Shows increased basal chloride permeability and decreased Ca(2+)-induced chloride permeability. Its function is as follows. Calcium-activated chloride channel (CaCC). Shows increased sensitivity to intracellular Ca(2+). In Homo sapiens (Human), this protein is Anoctamin-1 (ANO1).